The following is a 667-amino-acid chain: Probable potassium transport system protein Kup (667 aa).

12 helical membrane passes run 16-36 (GFII…LYTM), 58-78 (VSLI…LIAL), 101-121 (WLII…ALTP), 146-166 (TNVI…QRFG), 167-187 (TGVI…VLGI), 221-241 (IFIL…YSDL), 253-273 (WPFV…WILA), 294-314 (VYLV…LISG), 343-363 (LYIP…VLYF), 373-393 (YGLA…YYLI), 399-419 (PLLA…FFLA), and 424-444 (FMHG…VMVI).

Belongs to the HAK/KUP transporter (TC 2.A.72) family.

It localises to the cell membrane. The catalysed reaction is K(+)(in) + H(+)(in) = K(+)(out) + H(+)(out). Functionally, transport of potassium into the cell. Likely operates as a K(+):H(+) symporter. This Streptococcus equi subsp. equi (strain 4047) protein is Probable potassium transport system protein Kup.